A 267-amino-acid polypeptide reads, in one-letter code: Small ribosomal subunit protein uS2 (267 aa).

Residues Ala232–Ala267 form a disordered region. Positions Ala258–Ala267 are enriched in basic and acidic residues.

Belongs to the universal ribosomal protein uS2 family.

The sequence is that of Small ribosomal subunit protein uS2 from Stenotrophomonas maltophilia (strain R551-3).